A 457-amino-acid polypeptide reads, in one-letter code: Methylenetetrahydrofolate--tRNA-(uracil-5-)-methyltransferase TrmFO (457 aa).

12–17 (GGGLAG) contacts FAD.

This sequence belongs to the MnmG family. TrmFO subfamily. The cofactor is FAD.

The protein resides in the cytoplasm. It carries out the reaction uridine(54) in tRNA + (6R)-5,10-methylene-5,6,7,8-tetrahydrofolate + NADH + H(+) = 5-methyluridine(54) in tRNA + (6S)-5,6,7,8-tetrahydrofolate + NAD(+). The enzyme catalyses uridine(54) in tRNA + (6R)-5,10-methylene-5,6,7,8-tetrahydrofolate + NADPH + H(+) = 5-methyluridine(54) in tRNA + (6S)-5,6,7,8-tetrahydrofolate + NADP(+). Catalyzes the folate-dependent formation of 5-methyl-uridine at position 54 (M-5-U54) in all tRNAs. The protein is Methylenetetrahydrofolate--tRNA-(uracil-5-)-methyltransferase TrmFO of Myxococcus xanthus (strain DK1622).